Consider the following 305-residue polypeptide: Putative ankyrin repeat protein RF_0580 (305 aa).

ANK repeat units follow at residues 5 to 34 (YNKNNLFAKLAYGDLSEVQALLKSGVNIDE), 39 to 68 (RGETALYNTLFTGYMDRAAFLLKHKASPNI), 72 to 101 (SGQTILYLLVMNNSIDKMKFLFENTTNIDL), 107 to 136 (CGHSPLHAATFNENIEAMELLLKKGADINS), 140 to 169 (FGASALHGTIYNNKLKAAELLLNHGADVNA), 173 to 202 (YEDTILHNIIGTNNIEAAKFLLQNGADVNI), and 206 to 235 (NNFTPLDRAILGQHKELAELFLKSGATIKI).

This chain is Putative ankyrin repeat protein RF_0580, found in Rickettsia felis (strain ATCC VR-1525 / URRWXCal2) (Rickettsia azadi).